Reading from the N-terminus, the 242-residue chain is Anamorsin homolog (242 aa).

An N-terminal SAM-like domain region spans residues 1–140 (MMNFADTLVI…NVTAENPDFL (140 aa)). Residues 140-159 (LSNEDDNDEHSSDGEAHENA) are disordered. A linker region spans residues 141 to 162 (SNEDDNDEHSSDGEAHENAEDN). Basic and acidic residues predominate over residues 148-159 (EHSSDGEAHENA). 4 residues coordinate [4Fe-4S] cluster: C205, C208, C216, and C219. Short sequence motifs (cx2C motif) lie at residues 205–208 (CGNC) and 216–219 (CASC). Positions 205-219 (CGNCYLGDAFRCASC) are fe-S binding site B.

Belongs to the anamorsin family. Monomer. [4Fe-4S] cluster is required as a cofactor.

The protein localises to the cytoplasm. The protein resides in the mitochondrion intermembrane space. In terms of biological role, component of the cytosolic iron-sulfur (Fe-S) protein assembly (CIA) machinery. Required for the maturation of extramitochondrial Fe-S proteins. Part of an electron transfer chain functioning in an early step of cytosolic Fe-S biogenesis, facilitating the de novo assembly of a [4Fe-4S] cluster on the cytosolic Fe-S scaffold complex. Electrons are transferred from NADPH via a FAD- and FMN-containing diflavin oxidoreductase. Together with the diflavin oxidoreductase, also required for the assembly of the diferric tyrosyl radical cofactor of ribonucleotide reductase (RNR), probably by providing electrons for reduction during radical cofactor maturation in the catalytic small subunit. The chain is Anamorsin homolog from Plasmodium vivax (strain Salvador I).